A 426-amino-acid chain; its full sequence is Tetracenomycin polyketide synthase ketoacyl synthase alpha subunit (426 aa).

A Ketosynthase family 3 (KS3) domain is found at 6 to 420 (EKRVVITGIG…GFQSAAVLAR (415 aa)). Active-site for beta-ketoacyl synthase activity residues include cysteine 173, histidine 313, and histidine 350.

It belongs to the thiolase-like superfamily. Beta-ketoacyl-ACP synthases family. The tetracenomycin polyketide synthase (TCM PKS) is composed of a ketosynthase complex (TcmKL), an acyl carrier protein (TcmM), a cyclase (TcmN) and a probable second cyclase (TcmJ). TcmK and TcmL form a heterodimeric complex.

It carries out the reaction 10 malonyl-CoA + 8 H(+) = tetracenomycin F2 + 10 CO2 + 10 CoA + 2 H2O. Its pathway is antibiotic biosynthesis; tetracenomycin C biosynthesis. Its function is as follows. Involved in the biosynthesis of tetracenomycin C (TCM C). Part of a type II polyketide synthase (PKS) that catalyzes the synthesis of tetracenomycin F2 (TCM F2), a precursor of TCM C, from malonyl-CoA. TcmK and TcmL form a heterodimeric alpha-beta complex that catalyzes the condensation reactions between the growing acyl-enzyme chain and the malonyl-CoA extender units. The sequence is that of Tetracenomycin polyketide synthase ketoacyl synthase alpha subunit from Streptomyces glaucescens.